The chain runs to 521 residues: GMP synthase [glutamine-hydrolyzing] (521 aa).

One can recognise a Glutamine amidotransferase type-1 domain in the interval 5 to 203 (KILILDFGSQ…VHEICGCGRD (199 aa)). The Nucleophile role is filled by C82. Catalysis depends on residues H177 and E179. The 193-residue stretch at 204-396 (WNMPDYVNEA…LGLPHEMVYR (193 aa)) folds into the GMPS ATP-PPase domain. 231-237 (SGGVDSS) contacts ATP.

In terms of assembly, homodimer.

The catalysed reaction is XMP + L-glutamine + ATP + H2O = GMP + L-glutamate + AMP + diphosphate + 2 H(+). The protein operates within purine metabolism; GMP biosynthesis; GMP from XMP (L-Gln route): step 1/1. Functionally, catalyzes the synthesis of GMP from XMP. This Aromatoleum aromaticum (strain DSM 19018 / LMG 30748 / EbN1) (Azoarcus sp. (strain EbN1)) protein is GMP synthase [glutamine-hydrolyzing].